A 123-amino-acid polypeptide reads, in one-letter code: Urotensin-2 (123 aa).

Positions 1–20 are cleaved as a signal peptide; the sequence is MDRVPFCCLLFVGLLNPLLS. The propeptide occupies 21-104; the sequence is FPVTDTGEMS…TVLSRLLART (84 aa). Residues 63–91 form a disordered region; the sequence is EAEGSLGQADPSAETPTPRGSLRKALTGQ. The cysteines at positions 117 and 122 are disulfide-linked.

Belongs to the urotensin-2 family. As to expression, brain specific.

It is found in the secreted. Highly potent vasoconstrictor. This chain is Urotensin-2 (Uts2), found in Rattus norvegicus (Rat).